We begin with the raw amino-acid sequence, 184 residues long: MYHHSPFYPHHLQTGEQDLDMERENDMDQNSKNSTQKPVKREKRRYRCRKRSPATIERAKTVRRDKANARERRRMNSLNDALEHLRGILPALPDEPKMTKIETLRKAQEYIASLSFQLSGGSPDSSQCCETGSCGLCSASQSLQSTPFQSPCFPQPLQYPSSYSNPPSQMYYHHHHQSPSFPHH.

The interval 1–55 (MYHHSPFYPHHLQTGEQDLDMERENDMDQNSKNSTQKPVKREKRRYRCRKRSPAT) is disordered. Over residues 28–37 (DQNSKNSTQK) the composition is skewed to polar residues. Positions 38 to 52 (PVKREKRRYRCRKRS) are enriched in basic residues. Residues 62-75 (VRRDKANARERRRM) are basic motif. One can recognise a bHLH domain in the interval 62-114 (VRRDKANARERRRMNSLNDALEHLRGILPALPDEPKMTKIETLRKAQEYIASL). Residues 76 to 114 (NSLNDALEHLRGILPALPDEPKMTKIETLRKAQEYIASL) form a helix-loop-helix motif region. The tract at residues 164–184 (SNPPSQMYYHHHHQSPSFPHH) is disordered. Positions 172–184 (YHHHHQSPSFPHH) are enriched in basic residues.

In terms of assembly, interacts with hlh-2; the interaction is direct.

It localises to the nucleus. Its function is as follows. Acts as a transcriptional regulator. Regulates expression of various genes, including homeobox protein unc-42 and helix-loop-helix protein hlh-34. Required for embryonic viability, neuromuscular development, organization of the nerve ring and neuronal cell body location. Regulates AIY neuron axon morphology and cell fate. Plays a role in cell autonomously establishing a neuronal left-right asymmetry. Involved in regulating glial specification. The sequence is that of Helix-loop-helix protein ngn-1 from Caenorhabditis elegans.